The chain runs to 288 residues: Nickel/cobalt efflux system RcnA (288 aa).

Topologically, residues 1-12 are periplasmic; sequence MGEFSTLLQQGN. Residues 13–33 form a helical membrane-spanning segment; sequence AWFFIPSAILLGVLHGLEPGH. Topologically, residues 34 to 51 are cytoplasmic; that stretch reads SKTMMAAFIIAIKGTIKQ. The chain crosses the membrane as a helical span at residues 52–72; sequence AVMLGLAATLSHTAVVWLIAL. Over 73–85 the chain is Periplasmic; sequence GGMYVSRAFTAES. The chain crosses the membrane as a helical span at residues 86–106; it reads VEPWLQLVSAIIILSTAFWMF. The Cytoplasmic segment spans residues 107 to 188; the sequence is WRTWKGERDG…FHDREVTNGQ (82 aa). Residues 125–137 are compositionally biased toward basic residues; the sequence is THHHHDHEHHHHD. The disordered stretch occupies residues 125–144; the sequence is THHHHDHEHHHHDHDHDHHH. The chain crosses the membrane as a helical span at residues 189 to 209; it reads ILLFGLTGGLIPCPAAITVLL. Over 210–223 the chain is Periplasmic; sequence ICIQLKAFTLGATM. Residues 224 to 244 form a helical membrane-spanning segment; sequence VLCFSIGLALTLVAVGVGAAI. Over 245–266 the chain is Cytoplasmic; the sequence is SVQQAAKRWSGFNTLARKAPYF. A helical transmembrane segment spans residues 267 to 287; the sequence is SSILIGLVGLYMGMHGYLGII. Arg288 is a topological domain (periplasmic).

This sequence belongs to the NiCoT transporter (TC 2.A.52) family. RcnA subfamily.

The protein localises to the cell inner membrane. In terms of biological role, efflux system for nickel and cobalt. This Citrobacter koseri (strain ATCC BAA-895 / CDC 4225-83 / SGSC4696) protein is Nickel/cobalt efflux system RcnA (rcnA).